Here is a 228-residue protein sequence, read N- to C-terminus: Cytidylate kinase (228 aa).

Position 12–20 (12–20) interacts with ATP; the sequence is GPASAGKST.

This sequence belongs to the cytidylate kinase family. Type 1 subfamily.

The protein resides in the cytoplasm. The enzyme catalyses CMP + ATP = CDP + ADP. The catalysed reaction is dCMP + ATP = dCDP + ADP. This chain is Cytidylate kinase, found in Lactiplantibacillus plantarum (strain ATCC BAA-793 / NCIMB 8826 / WCFS1) (Lactobacillus plantarum).